We begin with the raw amino-acid sequence, 234 residues long: Large ribosomal subunit protein eL6 (234 aa).

The protein belongs to the eukaryotic ribosomal protein eL6 family.

The sequence is that of Large ribosomal subunit protein eL6 (RPL6) from Mesembryanthemum crystallinum (Common ice plant).